Reading from the N-terminus, the 21-residue chain is Tricyclic peptide RP 71955 (21 aa).

The segment at residues 1 to 9 (CLGIGSCND) is a cross-link (3-cysteinyl-aspartic acid (Cys-Asp)). 2 cysteine pairs are disulfide-bonded: C1-C13 and C7-C19.

In terms of biological role, active against HIV-1 virus in vitro. The sequence is that of Tricyclic peptide RP 71955 from Streptomyces sp. (strain SP9440).